We begin with the raw amino-acid sequence, 422 residues long: Trigger factor (422 aa).

The PPIase FKBP-type domain maps to 158–242 (GDFAVVSLES…VKGLRKKELP (85 aa)).

This sequence belongs to the FKBP-type PPIase family. Tig subfamily.

It localises to the cytoplasm. The catalysed reaction is [protein]-peptidylproline (omega=180) = [protein]-peptidylproline (omega=0). Involved in protein export. Acts as a chaperone by maintaining the newly synthesized protein in an open conformation. Functions as a peptidyl-prolyl cis-trans isomerase. The chain is Trigger factor from Solibacter usitatus (strain Ellin6076).